Consider the following 129-residue polypeptide: MAKTPVRTRKRVKKQVVDGVAHIHASFNNTIVTITDRQGNALAWATAGGSGFRGSRKSTPFAAQVAAERCAEVVKEFGLKNLEVMVKGPGPGRESTIRALNAAGFRITNITDVTPIPHNGCRPPKKRRV.

Belongs to the universal ribosomal protein uS11 family. As to quaternary structure, part of the 30S ribosomal subunit. Interacts with proteins S7 and S18. Binds to IF-3.

Functionally, located on the platform of the 30S subunit, it bridges several disparate RNA helices of the 16S rRNA. Forms part of the Shine-Dalgarno cleft in the 70S ribosome. In Histophilus somni (strain 129Pt) (Haemophilus somnus), this protein is Small ribosomal subunit protein uS11.